We begin with the raw amino-acid sequence, 253 residues long: MARRKKIYEGKAKILYEGPEPGTIVQYFKDDATAFNAEKKAVIEGKGVLNNRLSEFFMTGLGHIGVPTHFIKRLNMREQLVRSVDIIPLEIIVRNYAAGTMSKRLGLEEGTQLPRPIVEYCYKDDKLGDPLVTEEHIAAFGWASQQDMDDMLSLALRVNDFLSGLMFGVGIRLVDFKIEVGRVYDGDFQRLVVADEISPDSCRLWDIESGRKLDKDVFRRDLGDLADAYTEVAQRLGVMPKNATPITKPTLIN.

The protein belongs to the SAICAR synthetase family.

The catalysed reaction is 5-amino-1-(5-phospho-D-ribosyl)imidazole-4-carboxylate + L-aspartate + ATP = (2S)-2-[5-amino-1-(5-phospho-beta-D-ribosyl)imidazole-4-carboxamido]succinate + ADP + phosphate + 2 H(+). It functions in the pathway purine metabolism; IMP biosynthesis via de novo pathway; 5-amino-1-(5-phospho-D-ribosyl)imidazole-4-carboxamide from 5-amino-1-(5-phospho-D-ribosyl)imidazole-4-carboxylate: step 1/2. The polypeptide is Phosphoribosylaminoimidazole-succinocarboxamide synthase (Roseobacter denitrificans (strain ATCC 33942 / OCh 114) (Erythrobacter sp. (strain OCh 114))).